Reading from the N-terminus, the 306-residue chain is Ribonuclease Z (306 aa).

Zn(2+) contacts are provided by His-63, His-65, Asp-67, His-68, His-141, Asp-208, and His-266. Catalysis depends on Asp-67, which acts as the Proton acceptor.

It belongs to the RNase Z family. As to quaternary structure, homodimer. Zn(2+) serves as cofactor.

It carries out the reaction Endonucleolytic cleavage of RNA, removing extra 3' nucleotides from tRNA precursor, generating 3' termini of tRNAs. A 3'-hydroxy group is left at the tRNA terminus and a 5'-phosphoryl group is left at the trailer molecule.. Zinc phosphodiesterase, which displays some tRNA 3'-processing endonuclease activity. Probably involved in tRNA maturation, by removing a 3'-trailer from precursor tRNA. This is Ribonuclease Z from Chlamydia caviae (strain ATCC VR-813 / DSM 19441 / 03DC25 / GPIC) (Chlamydophila caviae).